A 645-amino-acid chain; its full sequence is Acetyl-coenzyme A synthetase (645 aa).

Residues 190 to 193 (RGGR) and T308 each bind CoA. ATP contacts are provided by residues 384–386 (GEP), 408–413 (DTWWQT), D497, and R512. S520 is a binding site for CoA. R523 serves as a coordination point for ATP. Residues V534, H536, and V539 each contribute to the Mg(2+) site. K606 carries the post-translational modification N6-acetyllysine.

The protein belongs to the ATP-dependent AMP-binding enzyme family. Mg(2+) serves as cofactor. In terms of processing, acetylated. Deacetylation by the SIR2-homolog deacetylase activates the enzyme.

The enzyme catalyses acetate + ATP + CoA = acetyl-CoA + AMP + diphosphate. Functionally, catalyzes the conversion of acetate into acetyl-CoA (AcCoA), an essential intermediate at the junction of anabolic and catabolic pathways. AcsA undergoes a two-step reaction. In the first half reaction, AcsA combines acetate with ATP to form acetyl-adenylate (AcAMP) intermediate. In the second half reaction, it can then transfer the acetyl group from AcAMP to the sulfhydryl group of CoA, forming the product AcCoA. The protein is Acetyl-coenzyme A synthetase of Halorhodospira halophila (strain DSM 244 / SL1) (Ectothiorhodospira halophila (strain DSM 244 / SL1)).